A 387-amino-acid chain; its full sequence is Succinate--CoA ligase [ADP-forming] subunit beta (387 aa).

Positions 9–244 (KRLLAEEGVP…STQQDGREIT (236 aa)) constitute an ATP-grasp domain. ATP is bound by residues Lys-46, 53 to 55 (GRG), Glu-99, Ser-102, and Glu-107. Mg(2+)-binding residues include Asn-199 and Asp-213. Residues Asn-264 and 321–323 (GIT) each bind substrate.

This sequence belongs to the succinate/malate CoA ligase beta subunit family. As to quaternary structure, heterotetramer of two alpha and two beta subunits. It depends on Mg(2+) as a cofactor.

It catalyses the reaction succinate + ATP + CoA = succinyl-CoA + ADP + phosphate. The enzyme catalyses GTP + succinate + CoA = succinyl-CoA + GDP + phosphate. The protein operates within carbohydrate metabolism; tricarboxylic acid cycle; succinate from succinyl-CoA (ligase route): step 1/1. Functionally, succinyl-CoA synthetase functions in the citric acid cycle (TCA), coupling the hydrolysis of succinyl-CoA to the synthesis of either ATP or GTP and thus represents the only step of substrate-level phosphorylation in the TCA. The beta subunit provides nucleotide specificity of the enzyme and binds the substrate succinate, while the binding sites for coenzyme A and phosphate are found in the alpha subunit. This is Succinate--CoA ligase [ADP-forming] subunit beta from Acidithiobacillus ferrooxidans (strain ATCC 23270 / DSM 14882 / CIP 104768 / NCIMB 8455) (Ferrobacillus ferrooxidans (strain ATCC 23270)).